Consider the following 232-residue polypeptide: Ribonuclease 3 (232 aa).

Positions 10 to 135 constitute an RNase III domain; that stretch reads ALKIYEATGY…LIGAMYMDGG (126 aa). Glu-48 is a Mg(2+) binding site. Asp-52 is a catalytic residue. Residues Asn-121 and Glu-124 each contribute to the Mg(2+) site. Glu-124 is an active-site residue. The DRBM domain maps to 161–230; it reads DPKTALQEWV…AKLMLKKITE (70 aa).

Belongs to the ribonuclease III family. As to quaternary structure, homodimer. Mg(2+) serves as cofactor.

It is found in the cytoplasm. The catalysed reaction is Endonucleolytic cleavage to 5'-phosphomonoester.. Its function is as follows. Digests double-stranded RNA. Involved in the processing of primary rRNA transcript to yield the immediate precursors to the large and small rRNAs (23S and 16S). Processes some mRNAs, and tRNAs when they are encoded in the rRNA operon. Processes pre-crRNA and tracrRNA of type II CRISPR loci if present in the organism. In Anaplasma marginale (strain Florida), this protein is Ribonuclease 3.